Here is an 805-residue protein sequence, read N- to C-terminus: U-box domain-containing protein 70 (805 aa).

TPR repeat units follow at residues 15 to 48 (ARRE…DPRD), 49 to 82 (ISFL…GREL), 90 to 127 (ARAL…HYSE), 129 to 153 (TLAK…DQEA), 154 to 187 (ADHH…NPKD), 189 to 221 (RVFS…DPTF), and 222 to 255 (LKGY…DPNN). The tract at residues 136–160 (AEEARKEIEERERLDQEAADHHRDR) is disordered. A coiled-coil region spans residues 341 to 417 (RKETEESLSR…VREVEELRQK (77 aa)). The Protein kinase domain occupies 445–711 (FSNSLKIGEG…GEVWAIVEAI (267 aa)). Residues 451–459 (IGEGGFGCV) and Lys472 contribute to the ATP site. Asp567 (proton acceptor) is an active-site residue. One can recognise a U-box domain in the interval 730-804 (SPPSYFICPI…QEWLQQHSMS (75 aa)).

The protein belongs to the protein kinase superfamily. Ser/Thr protein kinase family. As to quaternary structure, interacts with MODD.

It catalyses the reaction L-seryl-[protein] + ATP = O-phospho-L-seryl-[protein] + ADP + H(+). The enzyme catalyses L-threonyl-[protein] + ATP = O-phospho-L-threonyl-[protein] + ADP + H(+). The catalysed reaction is S-ubiquitinyl-[E2 ubiquitin-conjugating enzyme]-L-cysteine + [acceptor protein]-L-lysine = [E2 ubiquitin-conjugating enzyme]-L-cysteine + N(6)-ubiquitinyl-[acceptor protein]-L-lysine.. It participates in protein modification; protein ubiquitination. Its function is as follows. Functions as an E3 ubiquitin ligase. Is recruited by MODD to promote ubiquitination of BZIP46, a positive regulator of abscisic acid (ABA) signaling and drought stress tolerance. This Oryza sativa subsp. japonica (Rice) protein is U-box domain-containing protein 70.